The following is a 953-amino-acid chain: Protein ENHANCER OF LHP1 1 (953 aa).

WD repeat units lie at residues 15 to 55 (GGSA…TLPP), 60 to 99 (HHQD…FQTN), 102 to 143 (RFTL…RVLK), 144 to 183 (GHKG…VSFT), 192 to 232 (GFNT…KLFA), 236 to 275 (DHLE…DIDR), and 277 to 316 (KFEE…SMLS). 3 disordered regions span residues 347–370 (SESL…RKRL), 385–419 (EELN…GAFK), and 851–877 (ESKV…SATK). Acidic residues predominate over residues 349–359 (SLDDAMGDSDD). Positions 853 to 877 (KVQNPPASIQTSENTEAVMKSSATK) are enriched in polar residues. A Nuclear localization signal motif is present at residues 900-907 (TKKDKSDD). A disordered region spans residues 919-953 (KNPVNNVNKEDKGQEKEVNQGEARRSSNPFLKSTV). Residues 926–943 (NKEDKGQEKEVNQGEARR) are compositionally biased toward basic and acidic residues. Residues 944–953 (SSNPFLKSTV) show a composition bias toward polar residues.

In terms of assembly, interacts with EZA1/SWN, LHP1, SLD5 and CLF in the nucleus. As to expression, expressed in root meristematic zones, initiating lateral roots, young leaves and the shoot apex.

The protein resides in the nucleus. Its function is as follows. Participates in maintaining the H3K27me3 mark at target genes by interacting with LHP1-PRC2 complexes during replication, thus contributing to H3K27me3 inheritance. In Arabidopsis thaliana (Mouse-ear cress), this protein is Protein ENHANCER OF LHP1 1.